A 462-amino-acid polypeptide reads, in one-letter code: Amino-acid permease AapA (462 aa).

Helical transmembrane passes span 27–47, 48–68, 96–116, 134–154, 160–180, 209–229, 252–272, 279–299, 343–363, 366–386, 410–430, and 435–455; these read LMAI…KSIH, FAGP…FFIM, AAFI…MADL, LPGL…VKLF, WFAL…ILLI, GFIL…LVGL, ILLF…WNVL, FVQV…NFVV, ALFF…LMPE, FTLI…ITVI, PLSN…LALA, and IALF…KVQT.

The protein belongs to the amino acid-polyamine-organocation (APC) superfamily.

Its subcellular location is the cell membrane. Its function is as follows. Probable amino-acid or metabolite transport protein. In Bacillus subtilis (strain 168), this protein is Amino-acid permease AapA (aapA).